The primary structure comprises 272 residues: Imidazole glycerol phosphate synthase subunit HisF (272 aa).

Active-site residues include aspartate 11 and aspartate 130.

It belongs to the HisA/HisF family. In terms of assembly, heterodimer of HisH and HisF.

It is found in the cytoplasm. The catalysed reaction is 5-[(5-phospho-1-deoxy-D-ribulos-1-ylimino)methylamino]-1-(5-phospho-beta-D-ribosyl)imidazole-4-carboxamide + L-glutamine = D-erythro-1-(imidazol-4-yl)glycerol 3-phosphate + 5-amino-1-(5-phospho-beta-D-ribosyl)imidazole-4-carboxamide + L-glutamate + H(+). It participates in amino-acid biosynthesis; L-histidine biosynthesis; L-histidine from 5-phospho-alpha-D-ribose 1-diphosphate: step 5/9. IGPS catalyzes the conversion of PRFAR and glutamine to IGP, AICAR and glutamate. The HisF subunit catalyzes the cyclization activity that produces IGP and AICAR from PRFAR using the ammonia provided by the HisH subunit. In Methanococcus maripaludis (strain C6 / ATCC BAA-1332), this protein is Imidazole glycerol phosphate synthase subunit HisF.